The chain runs to 629 residues: Dehydrogenase pyvF (629 aa).

The N-terminal stretch at 1–22 (MAGSPFTTALLSAWTLSTVAVG) is a signal peptide. FAD-binding positions include 61-62 (AS) and 82-83 (EA). N-linked (GlcNAc...) asparagine glycosylation is present at N92. 144–147 (NLMA) lines the FAD pocket. N-linked (GlcNAc...) asparagine glycans are attached at residues N172, N182, N256, N284, N312, and N421. The active-site Proton acceptor is the H552. FAD-binding positions include A586 and 597–598 (PL).

This sequence belongs to the GMC oxidoreductase family. As to quaternary structure, homodimer. Requires FAD as cofactor.

It functions in the pathway secondary metabolite biosynthesis. Dehydrogenase; part of the gene cluster that mediates the biosynthesis of pyranoviolin A, a pyranonigrin analog with a C-3 methoxy group. Initially, the PKS portion of pyvA synthesizes C-10 carbon chain from 5 molecules of malonyl-CoA, which is then condensed with the thiolation (T) domain-bound glycine activated by the adenylation (A) domain. The subsequent chain release by Dieckmann condensation (DKC) could be catalyzed by the TE domain present at the C-terminus of pyvA and/or the alpha/beta hydrolase pyvD, installing the tetramic acid moiety. The FAD-dependent monooxygenase pyvC next epoxidizes one of the olefins of the polyketide part, and the epoxide ring-opening induces the dihydro-gamma-pyrone ring formation. The cytochrome P450 monooxygeanse pyvB would be responsible for the 2 consecutive reactions, in which the dihydro-gamma-pyrone is oxidized to gamma-pyrone and C-7 is hydroxylated to yield pyranonigrin F. Finally, the O-methyltransferase pyvH methylates the C-3 hydroxy group to complete the biosynthesis. The protein is Dehydrogenase pyvF of Aspergillus violaceofuscus (strain CBS 115571).